The primary structure comprises 327 residues: Regulatory protein MsrR (327 aa).

The span at 1–18 (MDKETNDNEYRRQSEHRT) shows a compositional bias: basic and acidic residues. The tract at residues 1-24 (MDKETNDNEYRRQSEHRTSAPKRK) is disordered. Residues 1-31 (MDKETNDNEYRRQSEHRTSAPKRKKKKKIRK) lie on the Cytoplasmic side of the membrane. A helical; Signal-anchor for type II membrane protein membrane pass occupies residues 32–52 (LPIILLIVVILLIALVVYIVH). Topologically, residues 53 to 327 (SYNSGVEYAK…QAIKDFLDED (275 aa)) are extracellular.

Belongs to the LytR/CpsA/Psr (LCP) family.

The protein resides in the cell membrane. Its function is as follows. Involved in SarA attenuation. Affects resistance to oxacillin and teicoplanin, as well as the synthesis of virulence factors. The protein is Regulatory protein MsrR (msrR) of Staphylococcus aureus (strain NCTC 8325 / PS 47).